The primary structure comprises 334 residues: Glyoxylate reductase (334 aa).

NADP(+)-binding positions include 158 to 161, 180 to 182, and 239 to 241; these read FGRI, SRT, and IAR. Catalysis depends on residues arginine 241 and glutamate 270. The active-site Proton donor is histidine 288. NADP(+) is bound at residue 288 to 290; that stretch reads HIG.

The protein belongs to the D-isomer specific 2-hydroxyacid dehydrogenase family. GyaR subfamily. In terms of assembly, homodimer.

The protein resides in the cytoplasm. The catalysed reaction is glycolate + NAD(+) = glyoxylate + NADH + H(+). This Thermococcus gammatolerans (strain DSM 15229 / JCM 11827 / EJ3) protein is Glyoxylate reductase.